We begin with the raw amino-acid sequence, 401 residues long: Insertion element ISM1 uncharacterized 48.3 kDa protein (401 aa).

In terms of biological role, this polypeptide is involved in transposition, and should therefore bind to nucleic acids. This Methanobrevibacter smithii protein is Insertion element ISM1 uncharacterized 48.3 kDa protein.